The chain runs to 262 residues: Ribosome-recycling factor, mitochondrial (262 aa).

A mitochondrion-targeting transit peptide spans 1-55; sequence MALGLRCFRLVHPAFCNSLAALTRPVSEVTLQTVRGRQNDHGQCMAYAAVPVRHF.

This sequence belongs to the RRF family.

It localises to the mitochondrion. In terms of biological role, responsible for the disassembly of ribosomes from messenger RNA at the termination of mitochondrial protein biosynthesis. Acts in collaboration with GFM2. Promotes mitochondrial ribosome recycling by dissolution of intersubunit contacts. This chain is Ribosome-recycling factor, mitochondrial (MRRF), found in Bos taurus (Bovine).